Here is a 471-residue protein sequence, read N- to C-terminus: Glutamate--tRNA ligase (471 aa).

Positions 9 to 19 (PSPTGYLHVGG) match the 'HIGH' region motif. Zn(2+) contacts are provided by C98, C100, C125, and H127. Positions 237–241 (KLSKR) match the 'KMSKS' region motif. Position 240 (K240) interacts with ATP.

This sequence belongs to the class-I aminoacyl-tRNA synthetase family. Glutamate--tRNA ligase type 1 subfamily. Monomer. Zn(2+) is required as a cofactor.

The protein localises to the cytoplasm. It carries out the reaction tRNA(Glu) + L-glutamate + ATP = L-glutamyl-tRNA(Glu) + AMP + diphosphate. Functionally, catalyzes the attachment of glutamate to tRNA(Glu) in a two-step reaction: glutamate is first activated by ATP to form Glu-AMP and then transferred to the acceptor end of tRNA(Glu). The chain is Glutamate--tRNA ligase from Shigella flexneri.